The following is a 106-amino-acid chain: uncharacterized protein (106 aa).

The protein belongs to the HesB/IscA family.

This is an uncharacterized protein from Cereibacter sphaeroides (Rhodobacter sphaeroides).